Reading from the N-terminus, the 304-residue chain is Acetylglutamate kinase (304 aa).

Residues 70 to 71, R92, and N185 contribute to the substrate site; that span reads GG.

Belongs to the acetylglutamate kinase family. ArgB subfamily.

The protein localises to the cytoplasm. It carries out the reaction N-acetyl-L-glutamate + ATP = N-acetyl-L-glutamyl 5-phosphate + ADP. It functions in the pathway amino-acid biosynthesis; L-arginine biosynthesis; N(2)-acetyl-L-ornithine from L-glutamate: step 2/4. Its function is as follows. Catalyzes the ATP-dependent phosphorylation of N-acetyl-L-glutamate. The chain is Acetylglutamate kinase from Paracoccus denitrificans (strain Pd 1222).